The chain runs to 419 residues: UDP-N-acetylglucosamine 1-carboxyvinyltransferase (419 aa).

22 to 23 serves as a coordination point for phosphoenolpyruvate; that stretch reads KN. Arg-91 is a UDP-N-acetyl-alpha-D-glucosamine binding site. Cys-115 serves as the catalytic Proton donor. Cys-115 is subject to 2-(S-cysteinyl)pyruvic acid O-phosphothioketal. UDP-N-acetyl-alpha-D-glucosamine is bound by residues 120 to 124, 160 to 163, Asp-305, and Val-327; these read RPVDL and KVSV.

The protein belongs to the EPSP synthase family. MurA subfamily.

It is found in the cytoplasm. The catalysed reaction is phosphoenolpyruvate + UDP-N-acetyl-alpha-D-glucosamine = UDP-N-acetyl-3-O-(1-carboxyvinyl)-alpha-D-glucosamine + phosphate. It functions in the pathway cell wall biogenesis; peptidoglycan biosynthesis. Functionally, cell wall formation. Adds enolpyruvyl to UDP-N-acetylglucosamine. This Salmonella arizonae (strain ATCC BAA-731 / CDC346-86 / RSK2980) protein is UDP-N-acetylglucosamine 1-carboxyvinyltransferase.